A 64-amino-acid polypeptide reads, in one-letter code: Phylloxin-S1 (64 aa).

An N-terminal signal peptide occupies residues 1 to 22; sequence MVFLKKSLLLVLFVGLVSLSIC. A propeptide spanning residues 23 to 44 is cleaved from the precursor; sequence EENKREEHEEVEENAEKAEEKR. Q63 carries the glutamine amide modification.

Expressed by the skin glands.

The protein resides in the secreted. Antimicrobial peptide against both Gram-positive and Gram-negative bacteria. The polypeptide is Phylloxin-S1 (Phyllomedusa sauvagei (Sauvage's leaf frog)).